Consider the following 431-residue polypeptide: Serine hydroxymethyltransferase (431 aa).

Residue 121–123 coordinates (6S)-5,6,7,8-tetrahydrofolate; the sequence is AHV. K227 carries the N6-(pyridoxal phosphate)lysine modification.

This sequence belongs to the SHMT family. As to quaternary structure, homodimer. The cofactor is pyridoxal 5'-phosphate.

The protein resides in the cytoplasm. It functions in the pathway amino-acid biosynthesis; glycine biosynthesis; glycine from L-serine: step 1/1. Its function is as follows. Catalyzes the reversible interconversion of serine and glycine with a modified folate serving as the one-carbon carrier. Also exhibits a pteridine-independent aldolase activity toward beta-hydroxyamino acids, producing glycine and aldehydes, via a retro-aldol mechanism. This chain is Serine hydroxymethyltransferase, found in Metallosphaera sedula (strain ATCC 51363 / DSM 5348 / JCM 9185 / NBRC 15509 / TH2).